The primary structure comprises 62 residues: Large ribosomal subunit protein bL32 (62 aa).

A disordered region spans residues 1–20; that stretch reads MAVPARHTSKQKKRSRRGHI. The segment covering 7–20 has biased composition (basic residues); sequence HTSKQKKRSRRGHI.

This sequence belongs to the bacterial ribosomal protein bL32 family.

The chain is Large ribosomal subunit protein bL32 from Lactobacillus acidophilus (strain ATCC 700396 / NCK56 / N2 / NCFM).